A 378-amino-acid chain; its full sequence is Cln5-like protein 1 (378 aa).

Positions 1 to 20 (MNKIIIFILFLISILQSVRG) are cleaved as a signal peptide. N63, N93, N135, N181, N220, N226, N254, and N280 each carry an N-linked (GlcNAc...) asparagine glycan. A helical membrane pass occupies residues 308–328 (WIFIIILLSFTTVYLVGGILI).

It belongs to the CLN5 family.

It is found in the membrane. In Dictyostelium discoideum (Social amoeba), this protein is Cln5-like protein 1 (cln5la).